The primary structure comprises 504 residues: Hexokinase-10 (504 aa).

A helical membrane pass occupies residues 7–29 (GWVRVAAVGWAVAACAVAAGMVA). Positions 39 to 493 (NRAVAVVRDL…SGTGAALLAA (455 aa)) constitute a Hexokinase domain. Positions 94-226 (DGSEEGISYA…GLNMKVNVLV (133 aa)) are hexokinase small subdomain. ADP contacts are provided by Gly108 and Thr109. The D-glucose site is built by Thr192, Lys193, Asn227, Asn254, Glu282, and Glu313. A hexokinase large subdomain region spans residues 227–482 (NNTVGTLALG…ATVSLRVMEE (256 aa)). Position 447 (Gly447) interacts with ADP.

Belongs to the hexokinase family. In terms of tissue distribution, expressed specifically in stamen.

Its subcellular location is the plastid. It is found in the chloroplast outer membrane. It catalyses the reaction a D-hexose + ATP = a D-hexose 6-phosphate + ADP + H(+). The catalysed reaction is D-fructose + ATP = D-fructose 6-phosphate + ADP + H(+). It carries out the reaction D-glucose + ATP = D-glucose 6-phosphate + ADP + H(+). The protein operates within carbohydrate metabolism; hexose metabolism. It participates in carbohydrate degradation; glycolysis; D-glyceraldehyde 3-phosphate and glycerone phosphate from D-glucose: step 1/4. In terms of biological role, fructose and glucose phosphorylating enzyme. The sequence is that of Hexokinase-10 (HXK10) from Oryza sativa subsp. japonica (Rice).